The primary structure comprises 359 residues: tRNA-specific 2-thiouridylase MnmA (359 aa).

Residues 9–16 (GISGGVDS) and methionine 35 each bind ATP. The interval 95-97 (NPD) is interaction with target base in tRNA. Catalysis depends on cysteine 100, which acts as the Nucleophile. The cysteines at positions 100 and 197 are disulfide-linked. An ATP-binding site is contributed by glycine 124. The segment at 147 to 149 (KDQ) is interaction with tRNA. The Cysteine persulfide intermediate role is filled by cysteine 197. The interval 309 to 310 (RY) is interaction with tRNA.

This sequence belongs to the MnmA/TRMU family.

The protein localises to the cytoplasm. It carries out the reaction S-sulfanyl-L-cysteinyl-[protein] + uridine(34) in tRNA + AH2 + ATP = 2-thiouridine(34) in tRNA + L-cysteinyl-[protein] + A + AMP + diphosphate + H(+). Catalyzes the 2-thiolation of uridine at the wobble position (U34) of tRNA, leading to the formation of s(2)U34. This is tRNA-specific 2-thiouridylase MnmA from Francisella tularensis subsp. tularensis (strain FSC 198).